The chain runs to 184 residues: Photosystem I assembly protein Ycf4 (184 aa).

A run of 2 helical transmembrane segments spans residues 22-42 (FCWA…GISS) and 57-77 (IIFF…LFIS).

Belongs to the Ycf4 family.

The protein localises to the plastid. The protein resides in the chloroplast thylakoid membrane. Its function is as follows. Seems to be required for the assembly of the photosystem I complex. This Ipomoea purpurea (Common morning glory) protein is Photosystem I assembly protein Ycf4.